A 435-amino-acid chain; its full sequence is T-box transcription factor T (435 aa).

Residues 51–219 constitute a DNA-binding region (T-box); that stretch reads LWLRFKELTN…YNPFAKAFLD (169 aa). A disordered region spans residues 279-308; the sequence is YPTLRSHRSSPYPSPYAHRNNSPTYSDNSP. Positions 297 to 308 are enriched in polar residues; it reads RNNSPTYSDNSP.

As to quaternary structure, monomer. Detected in testis, but not in other, normal tissues. Detected in lung tumors (at protein level).

The protein localises to the nucleus. Involved in the transcriptional regulation of genes required for mesoderm formation and differentiation. Binds to a palindromic T site 5'-TTCACACCTAGGTGTGAA-3' DNA sequence and activates gene transcription when bound to such a site. This chain is T-box transcription factor T, found in Homo sapiens (Human).